A 354-amino-acid chain; its full sequence is MLVLGIESSCDETGVALYDTERGLRAHCLHTQMAMHAEYGGVVPELASRDHIRRLVPLTEGCLAQAGASYGDIDAVAFTQGPGLGGALLAGSSYANALALALDKPVIPVHHLEGHLLSPLLAEEKPDFPFVALLVSGGHTQIMAVRGIGDYALLGESVDDAAGEAFDKTAKLLGLPYPGGAKLSELAESGRPEAFVFPRPMIHSDDLQMSFSGLKTAVLTAVEKVRAENGADDIPEQTRNDICRAFQDAVVDVLAAKVKKALLQTGFRTVVVAGGVGANRKLRETFGNMTVQIPTPKGKPKHPSEKVSVFFPPTAYCTDNGAMIAFAGAMHLGKGREVGAFNVRPRWPLSEIVR.

Positions 111 and 115 each coordinate Fe cation. Residues 134–138 (LVSGG), aspartate 167, glycine 180, and asparagine 279 contribute to the substrate site. A Fe cation-binding site is contributed by aspartate 319.

This sequence belongs to the KAE1 / TsaD family. Fe(2+) is required as a cofactor.

It localises to the cytoplasm. The catalysed reaction is L-threonylcarbamoyladenylate + adenosine(37) in tRNA = N(6)-L-threonylcarbamoyladenosine(37) in tRNA + AMP + H(+). In terms of biological role, required for the formation of a threonylcarbamoyl group on adenosine at position 37 (t(6)A37) in tRNAs that read codons beginning with adenine. Is involved in the transfer of the threonylcarbamoyl moiety of threonylcarbamoyl-AMP (TC-AMP) to the N6 group of A37, together with TsaE and TsaB. TsaD likely plays a direct catalytic role in this reaction. In Neisseria meningitidis serogroup A / serotype 4A (strain DSM 15465 / Z2491), this protein is tRNA N6-adenosine threonylcarbamoyltransferase.